The sequence spans 555 residues: Glutamine--tRNA ligase (555 aa).

Residues P34–H44 carry the 'HIGH' region motif. ATP-binding positions include E35–N37 and H41–S47. D67 and Y212 together coordinate L-glutamine. Residues T231, R261–L262, and M269–K271 each bind ATP. Positions V268–R272 match the 'KMSKS' region motif. An interaction with tRNA region spans residues T317–E324.

It belongs to the class-I aminoacyl-tRNA synthetase family. As to quaternary structure, monomer.

Its subcellular location is the cytoplasm. It carries out the reaction tRNA(Gln) + L-glutamine + ATP = L-glutaminyl-tRNA(Gln) + AMP + diphosphate. The sequence is that of Glutamine--tRNA ligase from Citrobacter koseri (strain ATCC BAA-895 / CDC 4225-83 / SGSC4696).